Consider the following 131-residue polypeptide: Ribonuclease P protein component (131 aa).

This sequence belongs to the RnpA family. In terms of assembly, consists of a catalytic RNA component (M1 or rnpB) and a protein subunit.

It carries out the reaction Endonucleolytic cleavage of RNA, removing 5'-extranucleotides from tRNA precursor.. RNaseP catalyzes the removal of the 5'-leader sequence from pre-tRNA to produce the mature 5'-terminus. It can also cleave other RNA substrates such as 4.5S RNA. The protein component plays an auxiliary but essential role in vivo by binding to the 5'-leader sequence and broadening the substrate specificity of the ribozyme. This Acinetobacter baylyi (strain ATCC 33305 / BD413 / ADP1) protein is Ribonuclease P protein component.